The primary structure comprises 82 residues: ATP synthase subunit c (82 aa).

Transmembrane regions (helical) follow at residues Phe-7 to Ile-27 and Phe-53 to Phe-73.

The protein belongs to the ATPase C chain family. As to quaternary structure, F-type ATPases have 2 components, F(1) - the catalytic core - and F(0) - the membrane proton channel. F(1) has five subunits: alpha(3), beta(3), gamma(1), delta(1), epsilon(1). F(0) has three main subunits: a(1), b(2) and c(10-14). The alpha and beta chains form an alternating ring which encloses part of the gamma chain. F(1) is attached to F(0) by a central stalk formed by the gamma and epsilon chains, while a peripheral stalk is formed by the delta and b chains.

It is found in the cell inner membrane. In terms of biological role, f(1)F(0) ATP synthase produces ATP from ADP in the presence of a proton or sodium gradient. F-type ATPases consist of two structural domains, F(1) containing the extramembraneous catalytic core and F(0) containing the membrane proton channel, linked together by a central stalk and a peripheral stalk. During catalysis, ATP synthesis in the catalytic domain of F(1) is coupled via a rotary mechanism of the central stalk subunits to proton translocation. Its function is as follows. Key component of the F(0) channel; it plays a direct role in translocation across the membrane. A homomeric c-ring of between 10-14 subunits forms the central stalk rotor element with the F(1) delta and epsilon subunits. This Aromatoleum aromaticum (strain DSM 19018 / LMG 30748 / EbN1) (Azoarcus sp. (strain EbN1)) protein is ATP synthase subunit c.